Consider the following 328-residue polypeptide: Lipoyl synthase (328 aa).

[4Fe-4S] cluster-binding residues include C57, C62, C68, C83, C87, C90, and S298. One can recognise a Radical SAM core domain in the interval 69-287 (WSRGTATFML…REEGLSLGFL (219 aa)).

It belongs to the radical SAM superfamily. Lipoyl synthase family. [4Fe-4S] cluster is required as a cofactor.

Its subcellular location is the cytoplasm. The catalysed reaction is [[Fe-S] cluster scaffold protein carrying a second [4Fe-4S](2+) cluster] + N(6)-octanoyl-L-lysyl-[protein] + 2 oxidized [2Fe-2S]-[ferredoxin] + 2 S-adenosyl-L-methionine + 4 H(+) = [[Fe-S] cluster scaffold protein] + N(6)-[(R)-dihydrolipoyl]-L-lysyl-[protein] + 4 Fe(3+) + 2 hydrogen sulfide + 2 5'-deoxyadenosine + 2 L-methionine + 2 reduced [2Fe-2S]-[ferredoxin]. It participates in protein modification; protein lipoylation via endogenous pathway; protein N(6)-(lipoyl)lysine from octanoyl-[acyl-carrier-protein]: step 2/2. In terms of biological role, catalyzes the radical-mediated insertion of two sulfur atoms into the C-6 and C-8 positions of the octanoyl moiety bound to the lipoyl domains of lipoate-dependent enzymes, thereby converting the octanoylated domains into lipoylated derivatives. The polypeptide is Lipoyl synthase (Deinococcus geothermalis (strain DSM 11300 / CIP 105573 / AG-3a)).